Consider the following 261-residue polypeptide: Transcription repressor OFP15 (261 aa).

Residues 1–28 (MKLPFLNKNHSTSSYSSNSSSSSWPWPS) are disordered. Residues 11–28 (STSSYSSNSSSSSWPWPS) are compositionally biased toward low complexity. An OVATE domain is found at 112 to 172 (FSLESDDPYS…FAAFVDLLMN (61 aa)).

Interacts with BLH1 and BLH3. Expressed in roots, cauline leaves, shoots, flower buds and siliques.

Its subcellular location is the nucleus. In terms of biological role, transcriptional repressor that regulates multiple aspects of plant growth and development through the regulation of BEL1-LIKE (BLH) and KNOX TALE (KNAT) homeodomain transcription factors. The protein is Transcription repressor OFP15 (OFP15) of Arabidopsis thaliana (Mouse-ear cress).